Here is a 364-residue protein sequence, read N- to C-terminus: Fructose-bisphosphate aldolase A (364 aa).

The residue at position 5 (Y5) is a Phosphotyrosine. At T9 the chain carries Phosphothreonine. A phosphoserine mark is found at S36 and S39. K42 carries the N6-acetyllysine; alternate modification. A Glycyl lysine isopeptide (Lys-Gly) (interchain with G-Cter in SUMO1); alternate cross-link involves residue K42. Residue K42 forms a Glycyl lysine isopeptide (Lys-Gly) (interchain with G-Cter in SUMO2); alternate linkage. Beta-D-fructose 1,6-bisphosphate is bound at residue R43. S46 is subject to Phosphoserine. K99 carries the post-translational modification N6-(2-hydroxyisobutyryl)lysine. K108 carries the N6-acetyllysine modification. The residue at position 111 (K111) is an N6-acetyllysine; alternate. An N6-malonyllysine; alternate modification is found at K111. A Phosphoserine modification is found at S132. K147 carries the post-translational modification N6-(2-hydroxyisobutyryl)lysine. E188 acts as the Proton acceptor in catalysis. K230 (schiff-base intermediate with dihydroxyacetone-P) is an active-site residue. S272 bears the Phosphoserine mark. Beta-D-fructose 1,6-bisphosphate contacts are provided by residues 272-274 (SGG), S301, and R304. K312 is subject to N6-malonyllysine. Residue K330 is modified to N6-acetyllysine.

It belongs to the class I fructose-bisphosphate aldolase family. As to quaternary structure, homotetramer. Interacts with SNX9 and WAS. Interacts with FBP2; the interaction blocks FBP2 inhibition by physiological concentrations of AMP and reduces inhibition by Ca(2+).

It localises to the cytoplasm. The protein localises to the myofibril. Its subcellular location is the sarcomere. The protein resides in the i band. It is found in the m line. The enzyme catalyses beta-D-fructose 1,6-bisphosphate = D-glyceraldehyde 3-phosphate + dihydroxyacetone phosphate. Its pathway is carbohydrate degradation; glycolysis; D-glyceraldehyde 3-phosphate and glycerone phosphate from D-glucose: step 4/4. Functionally, catalyzes the reversible conversion of beta-D-fructose 1,6-bisphosphate (FBP) into two triose phosphate and plays a key role in glycolysis and gluconeogenesis. In addition, may also function as scaffolding protein. The chain is Fructose-bisphosphate aldolase A (ALDOA) from Pongo abelii (Sumatran orangutan).